A 204-amino-acid polypeptide reads, in one-letter code: Recombination protein RecR (204 aa).

The segment at Cys58–Cys75 adopts a C4-type zinc-finger fold. The Toprim domain occupies Ser83 to Pro181.

Belongs to the RecR family.

Its function is as follows. May play a role in DNA repair. It seems to be involved in an RecBC-independent recombinational process of DNA repair. It may act with RecF and RecO. The chain is Recombination protein RecR from Chlorobaculum parvum (strain DSM 263 / NCIMB 8327) (Chlorobium vibrioforme subsp. thiosulfatophilum).